The chain runs to 239 residues: Large ribosomal subunit protein uL2 (239 aa).

The disordered stretch occupies residues 205–224 (GGHQHCGRPKTVARGTSPGR).

This sequence belongs to the universal ribosomal protein uL2 family. In terms of assembly, part of the 50S ribosomal subunit. Forms a bridge to the 30S subunit in the 70S ribosome.

Its function is as follows. One of the primary rRNA binding proteins. Required for association of the 30S and 50S subunits to form the 70S ribosome, for tRNA binding and peptide bond formation. It has been suggested to have peptidyltransferase activity; this is somewhat controversial. Makes several contacts with the 16S rRNA in the 70S ribosome. This Methanoculleus marisnigri (strain ATCC 35101 / DSM 1498 / JR1) protein is Large ribosomal subunit protein uL2.